The primary structure comprises 260 residues: Circadian clock-controlled protein daywake (260 aa).

A signal peptide spans 1–25 (MQLTGASMFLVWVGLLSWVSCRVDA).

It belongs to the TO family. Epidermis of newly eclosed adults.

In terms of biological role, component of the circadian clock or downstream effector of clock function. Required for suppressing daytime sleep (siesta) under ambient environmental temperatures. Part of a heat avoidance mechanism that modulates daytime sleep behavior under different environmental temperatures to minimize the risk of heat exposure. Under cooler ambient temperatures, suppresses daytime sleep (siesta) and thus allows for longer periods of daytime activity. This chain is Circadian clock-controlled protein daywake, found in Drosophila melanogaster (Fruit fly).